Reading from the N-terminus, the 361-residue chain is Chorismate synthase (361 aa).

The NADP(+) site is built by R48 and R54. Residues 125–127 (RSS), 238–239 (NA), G278, 293–297 (KPTSS), and R319 each bind FMN.

Belongs to the chorismate synthase family. As to quaternary structure, homotetramer. The cofactor is FMNH2.

It catalyses the reaction 5-O-(1-carboxyvinyl)-3-phosphoshikimate = chorismate + phosphate. The protein operates within metabolic intermediate biosynthesis; chorismate biosynthesis; chorismate from D-erythrose 4-phosphate and phosphoenolpyruvate: step 7/7. In terms of biological role, catalyzes the anti-1,4-elimination of the C-3 phosphate and the C-6 proR hydrogen from 5-enolpyruvylshikimate-3-phosphate (EPSP) to yield chorismate, which is the branch point compound that serves as the starting substrate for the three terminal pathways of aromatic amino acid biosynthesis. This reaction introduces a second double bond into the aromatic ring system. This chain is Chorismate synthase, found in Shigella boydii serotype 18 (strain CDC 3083-94 / BS512).